The chain runs to 538 residues: Syncytin-1 (538 aa).

Residues 1-20 (MALPYHILLFTVLLPSFTLT) form the signal peptide. At 21 to 443 (APPPCRCMTS…NTGPWGLLSQ (423 aa)) the chain is on the extracellular side. A glycan (N-linked (GlcNAc...) asparagine) is linked at Asn169. Positions 186 to 189 (CWIC) match the CXXC motif. Cystine bridges form between Cys186-Cys189, Cys186-Cys405, and Cys397-Cys404. Asn208, Asn214, Asn234, and Asn281 each carry an N-linked (GlcNAc...) asparagine glycan. A fusion peptide region spans residues 320 to 340 (ILPFVIGAGVLGALGTGIGGI). Residues 380-396 (LQNRRALDLLTAERGGT) form an immunosuppression region. A CX6CC motif is present at residues 397-405 (CLFLGEECC). N-linked (GlcNAc...) asparagine glycosylation is present at Asn409. A helical membrane pass occupies residues 444–464 (WMPWILPFLGPLAAIILLLLF). An essential for the fusiogenic function region spans residues 465–484 (GPCIFNLLVNFVSSRIEAVK). Over 465–538 (GPCIFNLLVN…LLRPNSAGSS (74 aa)) the chain is Cytoplasmic. Positions 496–538 (KIYRRPLDRPASPRSDVNDIKCTPPEEISTAQPLLRPNSAGSS) are disordered.

This sequence belongs to the gamma type-C retroviral envelope protein family. HERV class-I W env subfamily. In terms of assembly, the mature envelope protein (Env) consists of a trimer of SU-TM heterodimers attached probably by a labile interchain disulfide bond. Interacts with the C-type lectin CD209/DC-SIGN. In terms of processing, specific enzymatic cleavages in vivo yield mature proteins. Envelope glycoproteins are synthesized as an inactive precursor that is heavily N-glycosylated and processed likely by furin in the Golgi to yield the mature SU and TM proteins. The cleavage site between SU and TM requires the minimal sequence [KR]-X-[KR]-R. The CXXC motif is highly conserved across a broad range of retroviral envelope proteins. It is thought to participate in the formation of a labile disulfide bond possibly with the CX6CC motif present in the transmembrane protein.

The protein localises to the cell membrane. It localises to the virion. In terms of biological role, this endogenous retroviral envelope protein has retained its original fusogenic properties and participates in trophoblast fusion and the formation of a syncytium during placenta morphogenesis. May recognize and induce fusion through binding of SLC1A4 and SLC1A5. Its function is as follows. Endogenous envelope proteins may have kept, lost or modified their original function during evolution. Retroviral envelope proteins mediate receptor recognition and membrane fusion during early infection. The surface protein (SU) mediates receptor recognition, while the transmembrane protein (TM) acts as a class I viral fusion protein. The protein may have at least 3 conformational states: pre-fusion native state, pre-hairpin intermediate state, and post-fusion hairpin state. During viral and target cell membrane fusion, the coiled coil regions (heptad repeats) assume a trimer-of-hairpins structure, positioning the fusion peptide in close proximity to the C-terminal region of the ectodomain. The formation of this structure appears to drive apposition and subsequent fusion of membranes. The chain is Syncytin-1 (ERVW-1) from Gorilla gorilla gorilla (Western lowland gorilla).